Consider the following 119-residue polypeptide: Hemerythrin-like protein (119 aa).

Fe cation-binding residues include His26, His56, Glu60, His75, His79, His107, and Asp112.

The protein belongs to the hemerythrin family.

In terms of biological role, oxygen-binding protein. The oxygen-binding site contains two iron atoms. This Naegleria fowleri (Brain eating amoeba) protein is Hemerythrin-like protein (nfa1).